The sequence spans 467 residues: Glycogen synthase (467 aa).

K16 is an ADP-alpha-D-glucose binding site.

This sequence belongs to the glycosyltransferase 1 family. Bacterial/plant glycogen synthase subfamily.

The enzyme catalyses [(1-&gt;4)-alpha-D-glucosyl](n) + ADP-alpha-D-glucose = [(1-&gt;4)-alpha-D-glucosyl](n+1) + ADP + H(+). It functions in the pathway glycan biosynthesis; glycogen biosynthesis. Functionally, synthesizes alpha-1,4-glucan chains using ADP-glucose. This chain is Glycogen synthase, found in Paracoccus denitrificans (strain Pd 1222).